Consider the following 313-residue polypeptide: RHOMBOID-like protein 7 (313 aa).

Acidic residues predominate over residues 1–11; sequence MLSTAAEEDPE. Residues 1-24 form a disordered region; sequence MLSTAAEEDPEGGSRETNNGGETT. Residues 15–24 are compositionally biased toward polar residues; that stretch reads RETNNGGETT. A run of 7 helical transmembrane segments spans residues 31-51, 112-132, 143-163, 166-186, 196-216, 221-241, and 269-289; these read SWII…VMYY, WLHA…YIGV, VGTI…LFLE, ISVG…SELL, GVAI…GTLP, FAHI…LIHP, and LCIV…VILF. The active-site Nucleophile is Ser-171. His-223 serves as the catalytic Charge relay system.

This sequence belongs to the peptidase S54 family.

The protein localises to the membrane. The enzyme catalyses Cleaves type-1 transmembrane domains using a catalytic dyad composed of serine and histidine that are contributed by different transmembrane domains.. In terms of biological role, probable rhomboid-type serine protease that catalyzes intramembrane proteolysis. May function in embryo development. This chain is RHOMBOID-like protein 7, found in Arabidopsis thaliana (Mouse-ear cress).